Reading from the N-terminus, the 284-residue chain is 2-dehydro-3-deoxyphosphooctonate aldolase (284 aa).

Belongs to the KdsA family.

The protein localises to the cytoplasm. It carries out the reaction D-arabinose 5-phosphate + phosphoenolpyruvate + H2O = 3-deoxy-alpha-D-manno-2-octulosonate-8-phosphate + phosphate. It participates in carbohydrate biosynthesis; 3-deoxy-D-manno-octulosonate biosynthesis; 3-deoxy-D-manno-octulosonate from D-ribulose 5-phosphate: step 2/3. It functions in the pathway bacterial outer membrane biogenesis; lipopolysaccharide biosynthesis. The polypeptide is 2-dehydro-3-deoxyphosphooctonate aldolase (Vibrio atlanticus (strain LGP32) (Vibrio splendidus (strain Mel32))).